The chain runs to 407 residues: Argininosuccinate synthase (407 aa).

ATP-binding positions include 11-19 (AYSGGLDTS) and alanine 39. L-citrulline-binding residues include tyrosine 90 and serine 95. ATP is bound at residue glycine 120. L-aspartate-binding residues include threonine 122, asparagine 126, and aspartate 127. Position 126 (asparagine 126) interacts with L-citrulline. Arginine 130, serine 179, serine 188, glutamate 264, and tyrosine 276 together coordinate L-citrulline.

Belongs to the argininosuccinate synthase family. Type 1 subfamily. As to quaternary structure, homotetramer.

It localises to the cytoplasm. The enzyme catalyses L-citrulline + L-aspartate + ATP = 2-(N(omega)-L-arginino)succinate + AMP + diphosphate + H(+). Its pathway is amino-acid biosynthesis; L-arginine biosynthesis; L-arginine from L-ornithine and carbamoyl phosphate: step 2/3. The sequence is that of Argininosuccinate synthase from Roseiflexus sp. (strain RS-1).